The following is a 144-amino-acid chain: Angiogenin-4 (144 aa).

The first 24 residues, 1–24 (MTMSPCPLLLVFVLGLVVIPPTLA), serve as a signal peptide directing secretion. Histidine 36 (proton acceptor) is an active-site residue. 3 disulfides stabilise this stretch: cysteine 49–cysteine 103, cysteine 62–cysteine 114, and cysteine 80–cysteine 129. The Nucleolar localization signal motif lies at 54–58 (KERKL). Histidine 136 serves as the catalytic Proton donor.

It belongs to the pancreatic ribonuclease family. Detected in small intestine, caecum and colon, with the highest expression in Paneth cells in the intestinal epithelium.

The protein resides in the secreted. It is found in the cytoplasmic vesicle. Its subcellular location is the secretory vesicle lumen. The protein localises to the nucleus. It localises to the nucleolus. Has bactericidal activity against E.faecalis and L.monocytogenes, but not against L.innocua and E.coli. Promotes angiogenesis (in vitro). Has low ribonuclease activity (in vitro). Promotes proliferation of melanoma cells, but not of endothelial cells or fibroblasts (in vitro). This chain is Angiogenin-4 (Ang4), found in Mus musculus (Mouse).